The chain runs to 23 residues: Aurein-4.2 (23 aa).

Belongs to the frog skin active peptide (FSAP) family. Aurein subfamily. As to expression, expressed by the skin dorsal glands.

It localises to the secreted. Its function is as follows. Has no antimicrobial or anticancer activity. The sequence is that of Aurein-4.2 from Ranoidea aurea (Green and golden bell frog).